The primary structure comprises 212 residues: Octanoyltransferase (212 aa).

A BPL/LPL catalytic domain is found at 30–205 (ETTVDELWCL…ELVEGLGHSQ (176 aa)). Substrate contacts are provided by residues 69–76 (RGGQVTYH), 136–138 (SLG), and 149–151 (GLA). The active-site Acyl-thioester intermediate is the Cys167.

The protein belongs to the LipB family.

It localises to the cytoplasm. It catalyses the reaction octanoyl-[ACP] + L-lysyl-[protein] = N(6)-octanoyl-L-lysyl-[protein] + holo-[ACP] + H(+). The protein operates within protein modification; protein lipoylation via endogenous pathway; protein N(6)-(lipoyl)lysine from octanoyl-[acyl-carrier-protein]: step 1/2. Functionally, catalyzes the transfer of endogenously produced octanoic acid from octanoyl-acyl-carrier-protein onto the lipoyl domains of lipoate-dependent enzymes. Lipoyl-ACP can also act as a substrate although octanoyl-ACP is likely to be the physiological substrate. This Marinobacter nauticus (strain ATCC 700491 / DSM 11845 / VT8) (Marinobacter aquaeolei) protein is Octanoyltransferase.